A 207-amino-acid polypeptide reads, in one-letter code: Melanocortin-2 receptor accessory protein 2 (207 aa).

Residues 1–21 (MEMSAQRLASNRTSPQSPSNS) are disordered. The span at 7–21 (RLASNRTSPQSPSNS) shows a compositional bias: polar residues. Asn-11 carries an N-linked (GlcNAc...) asparagine glycan. A helical transmembrane segment spans residues 47-67 (IVIGFWVGLAVFVIFMFFVLT). Phosphoserine is present on Ser-91.

Belongs to the MRAP family. As to quaternary structure, homodimer and heterodimer. Forms antiparallel homodimers and heterodimers with MRAP. Interacts with MC1R, MC2R, MC3R and MC5R. Interacts with MC4R. As to expression, predominantly expressed in the brain, mainly in the pons and cerebellum but also in regions involved in energy homeostasis, such as the hypothalamus and brainstem.

It is found in the cell membrane. Its subcellular location is the endoplasmic reticulum membrane. Functionally, modulator of melanocortin receptor 4 (MC4R), a receptor involved in energy homeostasis. Plays a central role in the control of energy homeostasis and body weight regulation by increasing ligand-sensitivity of MC4R and MC4R-mediated generation of cAMP. May also act as a negative regulator of MC2R: competes with MRAP for binding to MC2R and impairs the binding of corticotropin (ACTH) to MC2R. May also regulate activity of other melanocortin receptors (MC1R, MC3R and MC5R); however, additional evidence is required in vivo. This is Melanocortin-2 receptor accessory protein 2 (Mrap2) from Mus musculus (Mouse).